A 264-amino-acid polypeptide reads, in one-letter code: MKQYLDLLRHVMETGSDRGDRTGTGTRSVFGYQMRFDLSEGFPVLTTKKLHLRSIIHELLWFLNGDTNIAYLKENGVSIWDEWADENGDLGPVYGAQWRSWPAPDGRHIDQIALLIEALKTNPNSRRHIVSAWNPALVDEMALPPCHCLFQFYVSDGKLSCQLYQRSADIFLGVPFNIASYALLTLMVAQVVGLKPGDFVHTLGDAHIYANHFEQAQLQMTRTPKALPTMRLNPDVKNLFGFKFEDFTLENYEADSSIKAPIAV.

Arginine 21 provides a ligand contact to dUMP. (6R)-5,10-methylene-5,6,7,8-tetrahydrofolate is bound at residue histidine 51. 126–127 (RR) serves as a coordination point for dUMP. Residue cysteine 146 is the Nucleophile of the active site. Residues 166–169 (RSAD), asparagine 177, and 207–209 (HIY) each bind dUMP. Position 169 (aspartate 169) interacts with (6R)-5,10-methylene-5,6,7,8-tetrahydrofolate. A (6R)-5,10-methylene-5,6,7,8-tetrahydrofolate-binding site is contributed by alanine 263.

The protein belongs to the thymidylate synthase family. Bacterial-type ThyA subfamily. As to quaternary structure, homodimer.

It localises to the cytoplasm. It catalyses the reaction dUMP + (6R)-5,10-methylene-5,6,7,8-tetrahydrofolate = 7,8-dihydrofolate + dTMP. The protein operates within pyrimidine metabolism; dTTP biosynthesis. Functionally, catalyzes the reductive methylation of 2'-deoxyuridine-5'-monophosphate (dUMP) to 2'-deoxythymidine-5'-monophosphate (dTMP) while utilizing 5,10-methylenetetrahydrofolate (mTHF) as the methyl donor and reductant in the reaction, yielding dihydrofolate (DHF) as a by-product. This enzymatic reaction provides an intracellular de novo source of dTMP, an essential precursor for DNA biosynthesis. In Agrobacterium fabrum (strain C58 / ATCC 33970) (Agrobacterium tumefaciens (strain C58)), this protein is Thymidylate synthase.